A 78-amino-acid chain; its full sequence is UPF0335 protein RPR_04100 (78 aa).

The protein belongs to the UPF0335 family.

In Rickettsia peacockii (strain Rustic), this protein is UPF0335 protein RPR_04100.